A 439-amino-acid polypeptide reads, in one-letter code: Acetyl esterase Axe7A (439 aa).

A signal peptide spans 1 to 31 (MFNFAPKQTTEMKKLLFTLVFVLGSMATALA). Ser-309 (nucleophile) is an active-site residue. Catalysis depends on charge relay system residues Asp-391 and His-420.

This sequence belongs to the carbohydrate esterase 7 family.

It participates in glycan degradation; xylan degradation. In terms of biological role, involved in degradation of plant cell wall polysaccharides. Has acetyl esterase activity towards a broad range of substrates including xylose-tetraacetate, 4-O-methylumbelliferyl acetate, glucose-pentaacetate, cephalosporin C, and acetylated xylo-oligosaccharides smaller than xylo-heptaose. Displays no detectable activity on polymeric acetylated xylan. The sequence is that of Acetyl esterase Axe7A from Xylanibacter ruminicola (strain ATCC 19189 / DSM 19721 / CIP 105475 / JCM 8958 / 23) (Prevotella ruminicola).